We begin with the raw amino-acid sequence, 402 residues long: MVDIADEMKPADKVRNFQINFGPQHPAAHGVLRLVLELDGEVVERVDPHIGLLHRGTEKLIEAKTYLQAVPYFDRLDYCAPMNQEHAFCLAAEKLLGIEVPKRGQLIRVLYSEIGRLLSHLLNVTTFAMDVGALTPPLWGFEEREKLMIFYERASGSRMHAAYFRPGGVHQDLPRALVEDIGAFCDPFLKLLDDLDGLVTENRIFKQRTVDIGVVSLEDALAWGFSGVMVRGSGAAWDLRRAQPYECYSELDFDIPIGKHGDCYDRYVVRMEEMRQSTKIMKQCVERLLKEAGPVSTTDNKIVPPKRGEMKRSMEALIHHFKLYTEGFHVPAGDVYAAVEAPKGEFGVYLVSDGTNKPYRCKIRAPGFAHLQAMDFLCRGHMLADVSAVLGSLDIVFGEVDR.

It belongs to the complex I 49 kDa subunit family. NDH-1 is composed of 14 different subunits. Subunits NuoB, C, D, E, F, and G constitute the peripheral sector of the complex.

Its subcellular location is the cell inner membrane. The catalysed reaction is a quinone + NADH + 5 H(+)(in) = a quinol + NAD(+) + 4 H(+)(out). Functionally, NDH-1 shuttles electrons from NADH, via FMN and iron-sulfur (Fe-S) centers, to quinones in the respiratory chain. The immediate electron acceptor for the enzyme in this species is believed to be ubiquinone. Couples the redox reaction to proton translocation (for every two electrons transferred, four hydrogen ions are translocated across the cytoplasmic membrane), and thus conserves the redox energy in a proton gradient. The sequence is that of NADH-quinone oxidoreductase subunit D from Xanthobacter autotrophicus (strain ATCC BAA-1158 / Py2).